Consider the following 116-residue polypeptide: Holo-[acyl-carrier-protein] synthase (116 aa).

Residues Asp-8 and Glu-50 each coordinate Mg(2+).

Belongs to the P-Pant transferase superfamily. AcpS family. It depends on Mg(2+) as a cofactor.

Its subcellular location is the cytoplasm. It carries out the reaction apo-[ACP] + CoA = holo-[ACP] + adenosine 3',5'-bisphosphate + H(+). Transfers the 4'-phosphopantetheine moiety from coenzyme A to a Ser of acyl-carrier-protein. The protein is Holo-[acyl-carrier-protein] synthase of Beutenbergia cavernae (strain ATCC BAA-8 / DSM 12333 / CCUG 43141 / JCM 11478 / NBRC 16432 / NCIMB 13614 / HKI 0122).